The sequence spans 290 residues: Probable protein phosphatase 2C 20 (290 aa).

Residues 31–278 (AHGYDFVKGK…DDISCIVPCF (248 aa)) form the PPM-type phosphatase domain. 4 residues coordinate Mn(2+): Asp68, Gly69, Asp230, and Asp269.

It belongs to the PP2C family. The cofactor is Mg(2+). It depends on Mn(2+) as a cofactor.

It catalyses the reaction O-phospho-L-seryl-[protein] + H2O = L-seryl-[protein] + phosphate. The catalysed reaction is O-phospho-L-threonyl-[protein] + H2O = L-threonyl-[protein] + phosphate. Functionally, may be involved in defense signaling. In Arabidopsis thaliana (Mouse-ear cress), this protein is Probable protein phosphatase 2C 20 (PPC3-1.2).